The following is a 117-amino-acid chain: UPF0102 protein FTF0898c (117 aa).

The protein belongs to the UPF0102 family.

This is UPF0102 protein FTF0898c from Francisella tularensis subsp. tularensis (strain FSC 198).